The following is a 228-amino-acid chain: Ribulose-phosphate 3-epimerase (228 aa).

Serine 11 contacts substrate. Residues histidine 36, aspartate 38, and histidine 69 each contribute to the a divalent metal cation site. The Proton acceptor role is filled by aspartate 38. Substrate-binding positions include histidine 69, 145 to 148 (GFCG), 180 to 182 (DGG), and 202 to 203 (AS). Aspartate 180 serves as a coordination point for a divalent metal cation. Catalysis depends on aspartate 180, which acts as the Proton donor.

The protein belongs to the ribulose-phosphate 3-epimerase family. A divalent metal cation serves as cofactor.

The catalysed reaction is D-ribulose 5-phosphate = D-xylulose 5-phosphate. Its pathway is carbohydrate degradation. In terms of biological role, catalyzes the reversible epimerization of D-ribulose 5-phosphate to D-xylulose 5-phosphate. In Chlamydia muridarum (strain MoPn / Nigg), this protein is Ribulose-phosphate 3-epimerase.